The chain runs to 486 residues: 2-hydroxymuconic semialdehyde dehydrogenase (486 aa).

Active-site residues include E254 and C288.

Belongs to the aldehyde dehydrogenase family.

It carries out the reaction (2Z,4E)-2-hydroxy-6-oxohexa-2,4-dienoate + NAD(+) + H2O = (2Z,4E)-2-hydroxyhexa-2,4-dienedioate + NADH + 2 H(+). Its pathway is aromatic compound metabolism; benzoate degradation via hydroxylation. 2-hydroxymuconic acid semialdehyde can be converted to 2-hydroxypent-2,4-dienoate either directly by the action of 2-hydroxymuconic semialdehyde hydrolase (HMSH) or by the action of three sequential enzymes, the first of which is HMSD. The protein is 2-hydroxymuconic semialdehyde dehydrogenase (dmpC) of Pseudomonas sp. (strain CF600).